The following is a 152-amino-acid chain: SsrA-binding protein (152 aa).

This sequence belongs to the SmpB family.

Its subcellular location is the cytoplasm. Its function is as follows. Required for rescue of stalled ribosomes mediated by trans-translation. Binds to transfer-messenger RNA (tmRNA), required for stable association of tmRNA with ribosomes. tmRNA and SmpB together mimic tRNA shape, replacing the anticodon stem-loop with SmpB. tmRNA is encoded by the ssrA gene; the 2 termini fold to resemble tRNA(Ala) and it encodes a 'tag peptide', a short internal open reading frame. During trans-translation Ala-aminoacylated tmRNA acts like a tRNA, entering the A-site of stalled ribosomes, displacing the stalled mRNA. The ribosome then switches to translate the ORF on the tmRNA; the nascent peptide is terminated with the 'tag peptide' encoded by the tmRNA and targeted for degradation. The ribosome is freed to recommence translation, which seems to be the essential function of trans-translation. This chain is SsrA-binding protein, found in Rickettsia africae (strain ESF-5).